Consider the following 238-residue polypeptide: Protein MIS12 homolog (238 aa).

A coiled-coil region spans residues 117–149; the sequence is ELDAELDSLRDKLNVVGKRSVELDSELQALERS.

Belongs to the mis12 family.

It is found in the chromosome. Its subcellular location is the centromere. The protein resides in the kinetochore. Its function is as follows. Constitutive component of kinetochores that is essential for proper cell division during mitotic cell cycle. May play a role in the modulation of centromere during meiosis. This chain is Protein MIS12 homolog, found in Arabidopsis thaliana (Mouse-ear cress).